The sequence spans 1559 residues: MASELGAGDDGSSTELAKPLYLQYLERALRLDHFLRQTSAIFNRNISSDDSEDGLDDNNPLLPESGDPLIQVKEEPPNSLLGETSGASSSGLLNPYSLNGVLQSESKSDKGNLYNFSKLKKSRKWLKSILLSDESSEADSQSEDNDDEEEELSLSREELHNMLRLHKYKKLHQNKYSKDKELQQYQYYSAGLLSTYDPFYEQQRHLLGPKKKKFKEDKKLKAKLKKVKKKRRRDEEFSSEESPRHHHHQTKVFAKFSHDAPPPGTKKKHLSIEQLNARRRKVWLSIVKKELPKANKQKSSARNLFLTNSRKLAHQCMKEVRRAALQAQKNCKETLPRARRLTKEMLLYWKKYEKVEKEHRKRAEKEALEQRKLDEEMREAKRQQRKLNFLITQTELYAHFMSRKRDMGHDGIQEEILRKLEDSSTQRQIDIGGGVVVNITQEDYDSNHFKAQALKNAENAYHIHQARTRSFDEDAKESRAAALRAADKSGSGFGESYSLANPSIRAGEDIPQPTIFNGKLKGYQLKGMNWLANLYEQGINGILADEMGLGKTVQSIALLAHLAERENIWGPFLIISPASTLNNWHQEFTRFVPKFKVLPYWGNPHDRKVIRRFWSQKTLYTQDAPFHVVITSYQLVVQDVKYFQRVKWQYMVLDEAQALKSSSSVRWKILLQFQCRNRLLLTGTPIQNTMAELWALLHFIMPTLFDSHEEFNEWFSKDIESHAENKSAIDENQLSRLHMILKPFMLRRIKKDVENELSDKIEILTYCQLTSRQKLLYQALKNKISIEDLLQSSMGSTQQAQNTTSSLMNLVMQFRKVCNHPELFERQETWSPFHISLKPYEISKFIYRHGQIRVFNHSRDRWLKVLLSPFAPDYIQQSLFHRKGINEGSCFSFLRFIDVSPAEMANLMLQGLLARWLALFLSLKASYRLHQLRSWAEPDGTSHQSYLRNKDFLLGVDFPLSFPNLCSCPLLKSLVFSSHCKAVSGYSDHVVHQRRSATSSLRCCLLTELPSFLCVASPRVTAVPLDSYCNDRSAEYERGVLKEGGSLAAKQCLLNGAPELATDWLSRRSQFFPEPAGGLLSIRPQNGWSFIRIPGKESLITDSGKLYALDVLLTRLKSQGHRVLIYSQMTRMIDLLEEYMVYRKHTYMRLDGSSKISERRDMVADFQTRNDIFVFLLSTRAGGLGINLTAADTVIFYDSDWNPTVDQQAMDRAHRLGQTKQVTVYRLICKGTIEERILQRAKEKSEIQRMVISGGNFKPDTLKPKEVVSLLLDDEELEKKLRLRQEEKRQQEESNRVKERKRKREKYAEKKKKEDELDGKRRKEGVNLVIPFVPSADNSNLSADGDDSFISVDSAMPSPFSEISISSELHTGSIPPDESSSDMLVIVDDPASSAPQSRATNSPASITGSVSDTVNGISIQEVPAAGRGHSARSRGRPKGSGSTAKGAGKGRSRKSTAGSAAAMAGAKAGAAAASAAAYAAYGYNVSKGISASSPLQTSIVRPAGLADFGPSSASSPLSSPLNKGNNIPGTPKSLHMTSSLASDSLIRKQGKGTNPSGGR.

The assembles INO80 complex module with putative regulatory components INO80E, INO80F, UCHL5, NFRKB, MCRS1 and IN80D stretch occupies residues 1 to 268 (MASELGAGDD…DAPPPGTKKK (268 aa)). A disordered region spans residues 46–88 (ISSDDSEDGLDDNNPLLPESGDPLIQVKEEPPNSLLGETSGAS). K118 is modified (N6-acetyllysine). The segment at 213 to 250 (KFKEDKKLKAKLKKVKKKRRRDEEFSSEESPRHHHHQT) is disordered. Positions 214–528 (FKEDKKLKAK…KLKGYQLKGM (315 aa)) are assembles INO80 complex module consisting of conserved components ACTR8, ACTL6A and YY1. Over residues 220–232 (LKAKLKKVKKKRR) the composition is skewed to basic residues. The DBINO domain occupies 282-407 (VWLSIVKKEL…AHFMSRKRDM (126 aa)). The tract at residues 523 to 1559 (YQLKGMNWLA…GKGTNPSGGR (1037 aa)) is assembles INO80 complex module consisting of conserved components INO80B, INO80C, ACTR5, RVBL1, RVBL2. The Helicase ATP-binding domain maps to 532–703 (ANLYEQGING…WALLHFIMPT (172 aa)). An ATP-binding site is contributed by 545 to 552 (DEMGLGKT). Residues 1108–1263 (ALDVLLTRLK…GGNFKPDTLK (156 aa)) form the Helicase C-terminal domain. Composition is skewed to basic and acidic residues over residues 1285–1297 (QEEKRQQEESNRV) and 1306–1319 (KYAEKKKKEDELDG). Disordered regions lie at residues 1285–1319 (QEEKRQQEESNRVKERKRKREKYAEKKKKEDELDG), 1391–1464 (ASSA…AAMA), and 1504–1559 (GLAD…SGGR). Residues 1393–1418 (SAPQSRATNSPASITGSVSDTVNGIS) are compositionally biased toward polar residues. Residues 1510–1521 (PSSASSPLSSPL) show a composition bias toward low complexity. The residue at position 1515 (S1515) is a Phosphoserine.

The protein belongs to the SNF2/RAD54 helicase family. Component of the chromatin remodeling INO80 complex; three different complex modules assemble on different domains of INO80. Interacts with DDB1. Interacts with transcriptional repressor protein YY1; the interaction recruits the INO80 complex to YY1 target genes. Interacts with YY1AP1. Interacts with tubulin alpha. Widely expressed.

Its subcellular location is the cytoplasm. The protein resides in the nucleus. The protein localises to the cytoskeleton. It localises to the spindle. It is found in the chromosome. It catalyses the reaction ATP + H2O = ADP + phosphate + H(+). Its activity is regulated as follows. Activated upon binding to double stranded DNA or nucleosomes. ATPase component of the chromatin remodeling INO80 complex which is involved in transcriptional regulation, DNA replication and DNA repair. Binds DNA. As part of the INO80 complex, remodels chromatin by shifting nucleosomes. Regulates transcription upon recruitment by YY1 to YY1-activated genes, where it acts as an essential coactivator. Involved in UV-damage excision DNA repair. The contribution to DNA double-strand break repair appears to be largely indirect through transcriptional regulation. Involved in DNA replication. Required for microtubule assembly during mitosis thereby regulating chromosome segregation cycle. The polypeptide is Chromatin-remodeling ATPase INO80 (Ino80) (Mus musculus (Mouse)).